A 353-amino-acid chain; its full sequence is O-antigen chain mannosyltransferase RfbU (353 aa).

It belongs to the glycosyltransferase group 1 family. Glycosyltransferase 4 subfamily.

The enzyme catalyses alpha-L-rhamnosyl-(1-&gt;3)-alpha-D-galactosyl-1-diphospho-di-trans,octa-cis-undecaprenol + GDP-alpha-D-mannose = alpha-D-Man-(1-&gt;4)-alpha-L-Rha-(1-&gt;3)-alpha-D-Gal-di-trans,octa-cis-undecaprenyl diphosphate + GDP + H(+). Its pathway is bacterial outer membrane biogenesis; LPS O-antigen biosynthesis. Its function is as follows. Mannosyltransferase involved in the biosynthesis of the repeat unit of the lipopolysaccharide (LPS) O-antigen region. Catalyzes the addition of a mannose to the rhamnosyl-galactosyl-undecaprenyl diphosphate intermediate. This Salmonella typhimurium (strain LT2 / SGSC1412 / ATCC 700720) protein is O-antigen chain mannosyltransferase RfbU.